The following is a 322-amino-acid chain: uncharacterized protein (322 aa).

Transmembrane regions (helical) follow at residues 24–44 (LLHLQNFASAGIITILCIQIT), 68–88 (LFFELIGYHPFVIGALLLIFI), 100–120 (IVTSSVIILHLYMSGGITPTF), and 125–145 (VQLITVGIGVALLMNLYMPSL).

Its subcellular location is the cell membrane. This is an uncharacterized protein from Bacillus subtilis (strain 168).